Reading from the N-terminus, the 301-residue chain is Protein p34 (301 aa).

5 consecutive transmembrane segments (helical) span residues 15–35 (YLSV…WVVT), 40–60 (ILAA…NLIA), 83–103 (TIFS…FSSV), 120–140 (TVMY…TYVI), and 171–191 (LSDY…LYIF).

It belongs to the cation diffusion facilitator (CDF) transporter (TC 2.A.4) family.

The protein localises to the cell membrane. This Rickettsia rickettsii (strain Sheila Smith) protein is Protein p34 (p34).